The following is a 446-amino-acid chain: MSFSAIGDCQLISQLYQYKKHRVICSVKVLPTPVTHFERESKNDFHWMTADRWSRIECGLWRLFENLKQWQDAYQLDTELIIDHIIVRVQATNKSHPATVALLAGTESSSKDLCLDLQLQYITQEDTTIVDVIPAKRELATEAETNGTRPTSRKIRVANSGSKPKAGTQSKPKHIDADNEDDKSSTTASQPTKIKSERRSISQGGEKDKASSSSPSSSQQSNRIKRSHSPSQQNSRSSSVEAKPARRSGRSPIRPSRFKNFVVGETRSGKSRGPKPKVKRVSPVPAKDFKVEHMDGGRFNALQRLDSMLDTPKPREVKILLLEKMGEDEVLNTFENYRSDFDKLFKEREFKPRTSHYMNIAHMDVIDILSKSIHQQMLKKLGEVYSSRSNHTSLLVNGLLPLWIVRLFMDTYTLSQSEAVQQIRDQMKYNTYLRALNDEPLSSDLD.

The interval 141–282 (TEAETNGTRP…GPKPKVKRVS (142 aa)) is disordered. The segment covering 159–170 (NSGSKPKAGTQS) has biased composition (polar residues). The span at 194 to 210 (IKSERRSISQGGEKDKA) shows a compositional bias: basic and acidic residues. Phosphoserine occurs at positions 200, 202, 212, and 214. Composition is skewed to low complexity over residues 211–221 (SSSSPSSSQQS) and 229–239 (SPSQQNSRSSS). S251 is subject to Phosphoserine. The span at 269–280 (GKSRGPKPKVKR) shows a compositional bias: basic residues. Phosphoserine occurs at positions 282 and 307.

This is an uncharacterized protein from Drosophila melanogaster (Fruit fly).